The sequence spans 712 residues: Testis-specific gene 10 protein (712 aa).

Ser161 carries the post-translational modification Phosphoserine. The interval 571–703 (QMTNERISMQ…SPDRDLDRSL (133 aa)) is interaction with HIF1A. Positions 673–699 (YHLGSMKPNTKCHSPERAHHRSPDRDL) are disordered. A compositionally biased stretch (basic and acidic residues) spans 685 to 699 (HSPERAHHRSPDRDL). Ser702 bears the Phosphoserine mark.

This sequence belongs to the CEP135/TSGA10 family. In terms of assembly, interacts with HIF1A. In terms of processing, processed into N-terminal 27-kDa and C-terminal 55-kDa fragments. In terms of tissue distribution, expressed in testis, predominantly in elongated spermatids (at protein level). Detected in spermatocytes only at the mRNA, but not at the protein level.

The protein resides in the cytoplasm. Its subcellular location is the cytoskeleton. It is found in the microtubule organizing center. It localises to the centrosome. The protein localises to the centriole. Functionally, plays a role in spermatogenesis. When overexpressed, prevents nuclear localization of HIF1A. This is Testis-specific gene 10 protein (Tsga10) from Rattus norvegicus (Rat).